Reading from the N-terminus, the 325-residue chain is Tagatose 1,6-diphosphate aldolase (325 aa).

The protein belongs to the aldolase LacD family.

The enzyme catalyses D-tagatofuranose 1,6-bisphosphate = D-glyceraldehyde 3-phosphate + dihydroxyacetone phosphate. It participates in carbohydrate metabolism; D-tagatose 6-phosphate degradation; D-glyceraldehyde 3-phosphate and glycerone phosphate from D-tagatose 6-phosphate: step 2/2. The polypeptide is Tagatose 1,6-diphosphate aldolase (Staphylococcus haemolyticus (strain JCSC1435)).